The primary structure comprises 212 residues: Redox-sensing transcriptional repressor Rex (212 aa).

Residues 17-56 constitute a DNA-binding region (H-T-H motif); sequence KYHRYLQELMENDIDRISSKELSEKIGFTASQIRQDLNCF. An NAD(+)-binding site is contributed by 91-96; sequence GAGNIG.

Belongs to the transcriptional regulatory Rex family. In terms of assembly, homodimer.

Its subcellular location is the cytoplasm. Modulates transcription in response to changes in cellular NADH/NAD(+) redox state. This chain is Redox-sensing transcriptional repressor Rex, found in Clostridium perfringens (strain SM101 / Type A).